We begin with the raw amino-acid sequence, 344 residues long: Phenylalanine--tRNA ligase alpha subunit (344 aa).

Mg(2+) is bound at residue Glu-261.

The protein belongs to the class-II aminoacyl-tRNA synthetase family. Phe-tRNA synthetase alpha subunit type 1 subfamily. In terms of assembly, tetramer of two alpha and two beta subunits. Mg(2+) is required as a cofactor.

It localises to the cytoplasm. It carries out the reaction tRNA(Phe) + L-phenylalanine + ATP = L-phenylalanyl-tRNA(Phe) + AMP + diphosphate + H(+). The chain is Phenylalanine--tRNA ligase alpha subunit from Ehrlichia ruminantium (strain Gardel).